The primary structure comprises 230 residues: Homeobox protein Hox-B5 (230 aa).

The tract at residues 1–135 (GGGGGNVSGS…GAAGTDGQSP (135 aa)) is disordered. The span at 49-65 (FPGQESSRFRANQNCPL) shows a compositional bias: polar residues. Residues 87-103 (ATSSAHFTETEETSASS) are compositionally biased toward low complexity. Positions 137-142 (IFPWMR) match the Antp-type hexapeptide motif. A DNA-binding region (homeobox) is located at residues 155–214 (GKRARTAYTRYQTLELEKEFHFNRYLTRRRRIEIAHTLCLSERQIKIWFQNRRMKWKKDN).

This sequence belongs to the Antp homeobox family.

It is found in the nucleus. In terms of biological role, sequence-specific transcription factor which is part of a developmental regulatory system that provides cells with specific positional identities on the anterior-posterior axis. The protein is Homeobox protein Hox-B5 (hoxb5) of Xenopus laevis (African clawed frog).